The following is a 119-amino-acid chain: Protein TusC (119 aa).

The protein belongs to the DsrF/TusC family. As to quaternary structure, heterohexamer, formed by a dimer of trimers. The hexameric TusBCD complex contains 2 copies each of TusB, TusC and TusD. The TusBCD complex interacts with TusE.

It localises to the cytoplasm. In terms of biological role, part of a sulfur-relay system required for 2-thiolation of 5-methylaminomethyl-2-thiouridine (mnm(5)s(2)U) at tRNA wobble positions. The sequence is that of Protein TusC from Citrobacter koseri (strain ATCC BAA-895 / CDC 4225-83 / SGSC4696).